The following is a 206-amino-acid chain: Reticulon-like protein B13 (206 aa).

The Reticulon domain maps to 16–206 (VEDIYLWRRK…GTEEKVKKSE (191 aa)). A run of 3 helical transmembrane segments spans residues 27–47 (LAFS…FYGF), 50–70 (ITIV…WGSL), and 134–154 (IGNL…GLTV).

It localises to the endoplasmic reticulum membrane. The chain is Reticulon-like protein B13 (RTNLB13) from Arabidopsis thaliana (Mouse-ear cress).